The chain runs to 282 residues: Protoheme IX farnesyltransferase (282 aa).

A run of 9 helical transmembrane segments spans residues 9-29 (LAKP…FLLA), 39-59 (LPLF…GCVF), 79-99 (LVTG…LLIL), 102-122 (LVLY…GFIV), 139-159 (VLGG…VVNI), 165-185 (LALF…IAML), 210-230 (IMLF…VLGS), 231-251 (ADLF…YKSI), and 261-281 (VFAK…CLTM).

This sequence belongs to the UbiA prenyltransferase family. Protoheme IX farnesyltransferase subfamily.

The protein resides in the cell inner membrane. It carries out the reaction heme b + (2E,6E)-farnesyl diphosphate + H2O = Fe(II)-heme o + diphosphate. Its pathway is porphyrin-containing compound metabolism; heme O biosynthesis; heme O from protoheme: step 1/1. Its function is as follows. Converts heme B (protoheme IX) to heme O by substitution of the vinyl group on carbon 2 of heme B porphyrin ring with a hydroxyethyl farnesyl side group. The chain is Protoheme IX farnesyltransferase from Francisella tularensis subsp. novicida (strain U112).